Reading from the N-terminus, the 334-residue chain is Leucine-rich repeat-containing protein 26 (334 aa).

An N-terminal signal peptide occupies residues M1–T30. The Extracellular portion of the chain corresponds to Q31–D265. Positions P38–W75 constitute an LRRNT domain. 2 disulfide bridges follow: C47-C53 and C51-C61. 5 LRR repeats span residues Q76–D97, A100–G121, V124–P145, A148–P169, and L172–L194. The LRRCT domain maps to N205–Q259. Cystine bridges form between C209–C235 and C211–C257. The chain crosses the membrane as a helical span at residues L266–A286. The Cytoplasmic portion of the chain corresponds to L287–A334. Positions Q312–A334 are disordered.

As to quaternary structure, interacts with KCNMA1.

The protein resides in the cell membrane. Its subcellular location is the cytoplasm. It is found in the cytoskeleton. Functionally, auxiliary protein of the large-conductance, voltage and calcium-activated potassium channel (BK alpha). Required for the conversion of BK alpha channels from a high-voltage to a low-voltage activated channel type in non-excitable cells. These are characterized by negative membrane voltages and constant low levels of calcium. The polypeptide is Leucine-rich repeat-containing protein 26 (Lrrc26) (Rattus norvegicus (Rat)).